The sequence spans 125 residues: Small ribosomal subunit protein bS6 (125 aa).

Residues 96–125 are disordered; it reads VTEASPMKAAKEERKPLAEVENNDFEDAEE. Residues 104-113 show a composition bias toward basic and acidic residues; that stretch reads AAKEERKPLA. Residues 116–125 are compositionally biased toward acidic residues; that stretch reads ENNDFEDAEE.

Belongs to the bacterial ribosomal protein bS6 family.

Binds together with bS18 to 16S ribosomal RNA. The sequence is that of Small ribosomal subunit protein bS6 from Haemophilus influenzae (strain 86-028NP).